Here is a 32-residue protein sequence, read N- to C-terminus: Ranatuerin-2Lb (32 aa).

A disulfide bridge connects residues Cys27 and Cys32.

Expressed by the skin glands.

The protein localises to the secreted. Functionally, antibacterial activity against Gram-positive bacterium S.aureus and Gram-negative bacterium E.coli. Has activity against C.albicans. This Rana luteiventris (Columbia spotted frog) protein is Ranatuerin-2Lb.